The chain runs to 151 residues: ALK and LTK ligand 2 (151 aa).

A signal peptide spans methionine 1–alanine 25. 2 disulfide bridges follow: cysteine 112-cysteine 148 and cysteine 126-cysteine 135.

The protein belongs to the ALKAL family. In terms of assembly, homodimer.

The protein resides in the secreted. Its subcellular location is the cell membrane. Cytokine that acts as a physiological ligand for receptor tyrosine kinases LTK and ALK, leading to their activation. Cytokine-binding is sufficient to activate LTK. In contrast, ALKAL2-driven activation of ALK is coupled with heparin-binding to ALK. Stimulation of ALK signaling is involved in neural development and regulation of energy expenditure. This is ALK and LTK ligand 2 from Rattus norvegicus (Rat).